We begin with the raw amino-acid sequence, 79 residues long: D-alanyl carrier protein (79 aa).

The 77-residue stretch at 1 to 77 (MDVKETILNI…KIISGVVELM (77 aa)) folds into the Carrier domain. At serine 35 the chain carries O-(pantetheine 4'-phosphoryl)serine.

It belongs to the DltC family. Post-translationally, 4'-phosphopantetheine is transferred from CoA to a specific serine of apo-DCP.

It is found in the cytoplasm. It participates in cell wall biogenesis; lipoteichoic acid biosynthesis. Its function is as follows. Carrier protein involved in the D-alanylation of lipoteichoic acid (LTA). The loading of thioester-linked D-alanine onto DltC is catalyzed by D-alanine--D-alanyl carrier protein ligase DltA. The DltC-carried D-alanyl group is further transferred to cell membrane phosphatidylglycerol (PG) by forming an ester bond, probably catalyzed by DltD. D-alanylation of LTA plays an important role in modulating the properties of the cell wall in Gram-positive bacteria, influencing the net charge of the cell wall. The polypeptide is D-alanyl carrier protein (Streptococcus suis (strain 05ZYH33)).